The following is a 410-amino-acid chain: Cytochrome P450(MEG) (410 aa).

Cys-355 provides a ligand contact to heme.

Belongs to the cytochrome P450 family. Heme is required as a cofactor.

It is found in the cytoplasm. It carries out the reaction reduced 2[4Fe-4S]-[ferredoxin] + progesterone + O2 + 2 H(+) = 15beta-hydroxyprogesterone + oxidized 2[4Fe-4S]-[ferredoxin] + H2O. In terms of biological role, has the capacity to hydroxylate certain steroids in the 15-beta position. Also hydroxylates progesterone in the 11-alpha and 9-beta position. The polypeptide is Cytochrome P450(MEG) (cyp106A2) (Priestia megaterium (Bacillus megaterium)).